A 212-amino-acid chain; its full sequence is ATP-dependent dethiobiotin synthetase BioD (212 aa).

Residue 12 to 17 participates in ATP binding; that stretch reads DCGKTF. Thr16 is a Mg(2+) binding site. Lys33 is an active-site residue. A substrate-binding site is contributed by Ser37. ATP-binding positions include Asp50, 110–113, and 170–171; these read EGAG and NC. Residues Asp50 and Glu110 each contribute to the Mg(2+) site.

It belongs to the dethiobiotin synthetase family. Homodimer. The cofactor is Mg(2+).

Its subcellular location is the cytoplasm. It catalyses the reaction (7R,8S)-7,8-diammoniononanoate + CO2 + ATP = (4R,5S)-dethiobiotin + ADP + phosphate + 3 H(+). Its pathway is cofactor biosynthesis; biotin biosynthesis; biotin from 7,8-diaminononanoate: step 1/2. In terms of biological role, catalyzes a mechanistically unusual reaction, the ATP-dependent insertion of CO2 between the N7 and N8 nitrogen atoms of 7,8-diaminopelargonic acid (DAPA, also called 7,8-diammoniononanoate) to form a ureido ring. The protein is ATP-dependent dethiobiotin synthetase BioD of Legionella pneumophila (strain Corby).